Reading from the N-terminus, the 559-residue chain is Formate--tetrahydrofolate ligase (559 aa).

Position 68-75 (68-75) interacts with ATP; sequence TPAGEGKS.

The protein belongs to the formate--tetrahydrofolate ligase family.

The enzyme catalyses (6S)-5,6,7,8-tetrahydrofolate + formate + ATP = (6R)-10-formyltetrahydrofolate + ADP + phosphate. The protein operates within one-carbon metabolism; tetrahydrofolate interconversion. The chain is Formate--tetrahydrofolate ligase from Bacillus licheniformis (strain ATCC 14580 / DSM 13 / JCM 2505 / CCUG 7422 / NBRC 12200 / NCIMB 9375 / NCTC 10341 / NRRL NRS-1264 / Gibson 46).